A 219-amino-acid polypeptide reads, in one-letter code: Nuclear transcription factor Y subunit B-8 (219 aa).

Residues Met1–Asp26 are disordered. A DNA-binding region spans residues Leu29 to Ser35. Positions Val56–Ile67 are subunit association domain (SAD). The segment covering Ala119–Thr134 has biased composition (low complexity). 2 disordered regions span residues Ala119 to Ala142 and Gly166 to Ala219. The span at Gly190–Ser206 shows a compositional bias: gly residues.

The protein belongs to the NFYB/HAP3 subunit family. Heterotrimeric transcription factor composed of three components, NF-YA, NF-YB and NF-YC. NF-YB and NF-YC must interact and dimerize for NF-YA association and DNA binding. Interacts with NFYC2, NFYC4 and NFYC6.

It localises to the cytoplasm. Component of the NF-Y/HAP transcription factor complex. The sequence is that of Nuclear transcription factor Y subunit B-8 from Oryza sativa subsp. japonica (Rice).